The primary structure comprises 282 residues: Probable iron transport system membrane protein HI_0360 (282 aa).

8 helical membrane-spanning segments follow: residues 17-37 (AMIL…YLML), 63-83 (LPYA…ILWI), 93-113 (AVIG…VSLN), 140-160 (IIIG…LLIF), 164-184 (TQAI…FTLL), 186-206 (ACVV…MVVT), 223-243 (IIAI…SYYL), and 245-265 (GATG…AFLF).

It belongs to the ABC-3 integral membrane protein family.

The protein localises to the cell inner membrane. Functionally, part of an ATP-driven transport system HI_0359/HI_0360/HI_0361/HI_0362 for iron. In Haemophilus influenzae (strain ATCC 51907 / DSM 11121 / KW20 / Rd), this protein is Probable iron transport system membrane protein HI_0360.